We begin with the raw amino-acid sequence, 251 residues long: MSGHSKWATTKHKKAVIDARRGKMFARLIKNIEVAARVGGGDPAGNPTLYDAIQKAKKSSVPNENIERARKRGAGEEAGGADWQTIMYEGYAPNGVAVLIECLTDNRNRAASEVRVAMTRNGGAMADPGSVSYLFSRKGVVTLEKNGLTEDDVLAAVLEAGAEDVNDLGDSFEVISEPGELVAVRSALQDAGIDYESAEAGFQSSVTVPVDVDGARKVFKLVDALEESDDVQNVWTNVDVSDEVLAELDEE.

It belongs to the TACO1 family.

The protein localises to the cytoplasm. This is Probable transcriptional regulatory protein MMAR_2098 from Mycobacterium marinum (strain ATCC BAA-535 / M).